Reading from the N-terminus, the 352-residue chain is DNA polymerase IV (352 aa).

One can recognise a UmuC domain in the interval Ile6–Gly187. Mg(2+)-binding residues include Asp10 and Asp105. Residue Glu106 is part of the active site.

It belongs to the DNA polymerase type-Y family. As to quaternary structure, monomer. Mg(2+) serves as cofactor.

The protein localises to the cytoplasm. The enzyme catalyses DNA(n) + a 2'-deoxyribonucleoside 5'-triphosphate = DNA(n+1) + diphosphate. In terms of biological role, poorly processive, error-prone DNA polymerase involved in untargeted mutagenesis. Copies undamaged DNA at stalled replication forks, which arise in vivo from mismatched or misaligned primer ends. These misaligned primers can be extended by PolIV. Exhibits no 3'-5' exonuclease (proofreading) activity. May be involved in translesional synthesis, in conjunction with the beta clamp from PolIII. The protein is DNA polymerase IV of Ectopseudomonas mendocina (strain ymp) (Pseudomonas mendocina).